The following is a 142-amino-acid chain: Large ribosomal subunit protein uL13 (142 aa).

This sequence belongs to the universal ribosomal protein uL13 family. As to quaternary structure, part of the 50S ribosomal subunit.

Functionally, this protein is one of the early assembly proteins of the 50S ribosomal subunit, although it is not seen to bind rRNA by itself. It is important during the early stages of 50S assembly. This chain is Large ribosomal subunit protein uL13, found in Agathobacter rectalis (strain ATCC 33656 / DSM 3377 / JCM 17463 / KCTC 5835 / VPI 0990) (Eubacterium rectale).